Here is a 184-residue protein sequence, read N- to C-terminus: NADH-quinone oxidoreductase subunit B 2 (184 aa).

[4Fe-4S] cluster contacts are provided by Cys-59, Cys-60, Cys-125, and Cys-153.

It belongs to the complex I 20 kDa subunit family. NDH-1 is composed of 14 different subunits. Subunits NuoB, C, D, E, F, and G constitute the peripheral sector of the complex. [4Fe-4S] cluster serves as cofactor.

It localises to the cell inner membrane. It catalyses the reaction a quinone + NADH + 5 H(+)(in) = a quinol + NAD(+) + 4 H(+)(out). NDH-1 shuttles electrons from NADH, via FMN and iron-sulfur (Fe-S) centers, to quinones in the respiratory chain. Couples the redox reaction to proton translocation (for every two electrons transferred, four hydrogen ions are translocated across the cytoplasmic membrane), and thus conserves the redox energy in a proton gradient. The sequence is that of NADH-quinone oxidoreductase subunit B 2 from Solibacter usitatus (strain Ellin6076).